The chain runs to 142 residues: Mitochondrial import inner membrane translocase subunit TIM22-4 (142 aa).

4 consecutive transmembrane segments (helical) span residues 21 to 41 (VTSG…LGAL), 70 to 88 (SCKT…ECIV), 97 to 113 (TVNT…SMSA), and 120 to 137 (ACIG…IEKF).

Belongs to the Tim17/Tim22/Tim23 family.

It localises to the mitochondrion inner membrane. In terms of biological role, essential core component of the TIM22 complex, a complex that mediates the import and insertion of multi-pass transmembrane proteins into the mitochondrial inner membrane. This is Mitochondrial import inner membrane translocase subunit TIM22-4 (TIM22-4) from Arabidopsis thaliana (Mouse-ear cress).